A 1051-amino-acid polypeptide reads, in one-letter code: Ubiquitin-activating enzyme E1 1 (1051 aa).

2 consecutive repeat copies span residues 56 to 194 and 453 to 605. The segment at 56-605 is 2 approximate repeats; sequence GRETMKRLFG…GAKCNTQMVI (550 aa). Residues A472, D498, R509, K522, and 570–571 contribute to the ATP site; that span reads DN. Residue C626 is the Glycyl thioester intermediate of the active site.

It belongs to the ubiquitin-activating E1 family. As to quaternary structure, monomer. In terms of processing, the N-terminus is blocked.

The catalysed reaction is ATP + ubiquitin + [E1 ubiquitin-activating enzyme]-L-cysteine = AMP + diphosphate + S-ubiquitinyl-[E1 ubiquitin-activating enzyme]-L-cysteine.. Its pathway is protein modification; protein ubiquitination. In terms of biological role, activates ubiquitin by first adenylating its C-terminal glycine residue with ATP, and thereafter linking this residue to the side chain of a cysteine residue in E1, yielding a ubiquitin-E1 thioester and free AMP. The chain is Ubiquitin-activating enzyme E1 1 from Triticum aestivum (Wheat).